We begin with the raw amino-acid sequence, 162 residues long: Photosystem II extrinsic protein V (162 aa).

The N-terminal stretch at 1–26 (MFNKNFWTSIIIGCLFCTITYSGVNA) is a signal peptide. Residues C62, C65, H66, and H117 each coordinate heme c.

It belongs to the cytochrome c family. PsbV subfamily. As to quaternary structure, PSII is composed of 1 copy each of membrane proteins PsbA, PsbB, PsbC, PsbD, PsbE, PsbF, PsbH, PsbI, PsbJ, PsbK, PsbL, PsbM, PsbT, PsbX, PsbY, PsbZ, Psb30/Ycf12, at least 3 peripheral proteins of the oxygen-evolving complex and a large number of cofactors. It forms dimeric complexes. The cofactor is heme c.

It is found in the plastid. It localises to the cyanelle thylakoid membrane. Its function is as follows. One of the extrinsic, lumenal subunits of photosystem II (PSII). PSII is a light-driven water plastoquinone oxidoreductase, using light energy to abstract electrons from H(2)O, generating a proton gradient subsequently used for ATP formation. The extrinsic proteins stabilize the structure of photosystem II oxygen-evolving complex (OEC), the ion environment of oxygen evolution and protect the OEC against heat-induced inactivation. This Cyanophora paradoxa protein is Photosystem II extrinsic protein V.